Here is a 397-residue protein sequence, read N- to C-terminus: Nuclear RNA export factor 5 (397 aa).

An RRM domain is found at 13–92 (WFKVTIPYGI…IFVSHFTAPY (80 aa)). LRR repeat units follow at residues 160–185 (ELLS…EKAP), 186–209 (KVKT…VKGL), 210–237 (KLEE…AIRD), and 238–265 (CFPK…ETMK). An NTF2; truncated domain is found at 280-367 (LVLQFLQQSN…ESQRWWCLLS (88 aa)).

The protein belongs to the NXF family. As to quaternary structure, interacts with NXT1 and NXT2.

It localises to the cytoplasm. It is found in the nucleus. In terms of biological role, could be involved in the export of mRNA from the nucleus to the cytoplasm. Could also have a role in polarized cytoplasmic transport and localization of mRNA in neurons. The protein is Nuclear RNA export factor 5 (NXF5) of Homo sapiens (Human).